The primary structure comprises 399 residues: Elongation factor Tu (399 aa).

A tr-type G domain is found at 10-209; that stretch reads KPHVNIGTIG…EVDAYIPTPK (200 aa). The G1 stretch occupies residues 19 to 26; the sequence is GHVDHGKT. 19 to 26 lines the GTP pocket; sequence GHVDHGKT. Position 26 (T26) interacts with Mg(2+). Residues 60–64 form a G2 region; it reads GITIA. The tract at residues 81-84 is G3; sequence DCPG. GTP-binding positions include 81–85 and 136–139; these read DCPGH and NKQD. Positions 136–139 are G4; sequence NKQD. The interval 174-176 is G5; it reads SAL.

This sequence belongs to the TRAFAC class translation factor GTPase superfamily. Classic translation factor GTPase family. EF-Tu/EF-1A subfamily. Monomer.

The protein localises to the cytoplasm. The enzyme catalyses GTP + H2O = GDP + phosphate + H(+). Functionally, GTP hydrolase that promotes the GTP-dependent binding of aminoacyl-tRNA to the A-site of ribosomes during protein biosynthesis. In Helicobacter pylori (strain P12), this protein is Elongation factor Tu.